The following is a 426-amino-acid chain: Probable serine/threonine-protein kinase PBL2 (426 aa).

The interval 1 to 54 (MGNCLDSSAKVDNSNHSPHANSASSGSKVSSKTSRSTGPSGLSTTSYSTDSSFG) is disordered. Gly2 carries the N-myristoyl glycine lipid modification. Cys4 carries the S-palmitoyl cysteine lipid modification. Positions 14–38 (SNHSPHANSASSGSKVSSKTSRSTG) are enriched in low complexity. Residues 39–52 (PSGLSTTSYSTDSS) are compositionally biased toward polar residues. Position 75 is a phosphothreonine (Thr75). In terms of domain architecture, Protein kinase spans 86–369 (FRQDNLLGEG…SEVLVTLEQL (284 aa)). ATP contacts are provided by residues 92-100 (LGEGGFGCV) and Lys124. Phosphotyrosine is present on Tyr169. The active-site Proton acceptor is the Asp219. Position 253 is an O-UMP-serine (Ser253). Residue Ser253 is modified to Phosphoserine. A phosphothreonine mark is found at Thr254 and Thr259. Residue Thr254 is modified to O-UMP-threonine. The residue at position 267 (Tyr267) is a Phosphotyrosine. Positions 374–426 (KPGTKHTQMESPRFHHSSVMQKSPVRYSHDRPLLHMTPGASPLPSYTQSPRVR) are disordered. Residues 417–426 (PSYTQSPRVR) show a composition bias toward polar residues.

It belongs to the protein kinase superfamily. Ser/Thr protein kinase family. In terms of assembly, interacts with FLS2. Interacts with the Xanthomonas campestris effector XopAC/AvrAC; the recognition of X.campestris effector XopAC/AvrAC requires the presence of RKS1 and RPP13L4/ZAR1. Component of a stable high-order oligomeric complex made of RKS1 and RPP13L4/ZAR1 which recruits X.campestris effector XopAC/AvrAC-mediated uridylylated PBL2 in the presence of ATP to form a wheel-like pentameric resistosome; this complex triggers immunity toward X.campestris in vascular tissues. Binds to RKS1 when uridylylated. In terms of processing, uridylylated at Ser-253 and Thr-254 by Xanthomonas campestris effector AvrAC/XopAC; this uridylylation is necessary for specific recruitment to RKS1 and to trigger immunity. Strongly expressed in leaves, moderately in roots, and barely in flowers, mostly in pedicels.

Its subcellular location is the cell membrane. It localises to the nucleus. It catalyses the reaction L-seryl-[protein] + ATP = O-phospho-L-seryl-[protein] + ADP + H(+). The enzyme catalyses L-threonyl-[protein] + ATP = O-phospho-L-threonyl-[protein] + ADP + H(+). Involved in disease resistance signaling. Contributes to pathogen-associated molecular pattern (PAMP)-triggered immunity (PTI) signaling and defense responses downstream of FLS2. Acts as a BIK1 decoy and enables Xanthomonas campestris AvrAC/XopAC detection; X.campestris effector AvrAC/XopAC-mediated uridylylation promotes the formation of a complex with RKS1 and RPP13L4/ZAR1 which, in turn, activates effector-triggered immunity (ETI) against X.campestris. Promotes, when uridylylated by AvrAC/XopAC, the release of ADP from the inactive RKS1-ZAR1 complex, thus activating the resistosome. The sequence is that of Probable serine/threonine-protein kinase PBL2 from Arabidopsis thaliana (Mouse-ear cress).